The sequence spans 165 residues: Putative TRAP transporter small permease protein HI_0051 (165 aa).

Transmembrane regions (helical) follow at residues 20 to 40, 51 to 71, 94 to 114, and 136 to 156; these read LEYL…FNSV, FSEE…IILV, IVLI…AYGA, and LYLA…FSMI.

The protein belongs to the TRAP transporter small permease family.

The protein localises to the cell inner membrane. This Haemophilus influenzae (strain ATCC 51907 / DSM 11121 / KW20 / Rd) protein is Putative TRAP transporter small permease protein HI_0051.